A 289-amino-acid polypeptide reads, in one-letter code: Homoserine kinase (289 aa).

ATP is bound at residue 79-89 (PLARGLGSSSS).

Belongs to the GHMP kinase family. Homoserine kinase subfamily.

The protein resides in the cytoplasm. It carries out the reaction L-homoserine + ATP = O-phospho-L-homoserine + ADP + H(+). It participates in amino-acid biosynthesis; L-threonine biosynthesis; L-threonine from L-aspartate: step 4/5. Functionally, catalyzes the ATP-dependent phosphorylation of L-homoserine to L-homoserine phosphate. This Streptococcus pneumoniae serotype 2 (strain D39 / NCTC 7466) protein is Homoserine kinase.